The sequence spans 354 residues: Protein RecA (354 aa).

65-72 (GPESSGKT) is a binding site for ATP.

It belongs to the RecA family.

The protein localises to the cytoplasm. In terms of biological role, can catalyze the hydrolysis of ATP in the presence of single-stranded DNA, the ATP-dependent uptake of single-stranded DNA by duplex DNA, and the ATP-dependent hybridization of homologous single-stranded DNAs. It interacts with LexA causing its activation and leading to its autocatalytic cleavage. This chain is Protein RecA, found in Pseudomonas syringae pv. syringae (strain B728a).